The following is a 129-amino-acid chain: Serum amyloid A-2 protein (129 aa).

Positions 1 to 18 (MKLFTGLIFCSLVLGVHS) are cleaved as a signal peptide. The residue at position 19 (glutamine 19) is a Pyrrolidone carboxylic acid. Positions 90-103 (KHGDSGHGVEDSRA) are enriched in basic and acidic residues. The segment at 90 to 129 (KHGDSGHGVEDSRADQAANEWGRSGKDPNHFRPPGLPDKY) is disordered.

It belongs to the SAA family. As to quaternary structure, apolipoprotein of the HDL complex.

The protein localises to the secreted. Its function is as follows. Major acute phase reactant. The polypeptide is Serum amyloid A-2 protein (Sus scrofa (Pig)).